The following is a 383-amino-acid chain: Acetylornithine deacetylase (383 aa).

His-80 is a binding site for Zn(2+). Asp-82 is an active-site residue. Asp-112 lines the Zn(2+) pocket. Glu-144 is an active-site residue. Zn(2+) contacts are provided by Glu-145, Glu-169, and His-355.

This sequence belongs to the peptidase M20A family. ArgE subfamily. As to quaternary structure, homodimer. Requires Zn(2+) as cofactor. Co(2+) is required as a cofactor. Glutathione serves as cofactor.

The protein localises to the cytoplasm. It catalyses the reaction N(2)-acetyl-L-ornithine + H2O = L-ornithine + acetate. The protein operates within amino-acid biosynthesis; L-arginine biosynthesis; L-ornithine from N(2)-acetyl-L-ornithine (linear): step 1/1. Functionally, catalyzes the hydrolysis of the amide bond of N(2)-acetylated L-amino acids. Cleaves the acetyl group from N-acetyl-L-ornithine to form L-ornithine, an intermediate in L-arginine biosynthesis pathway, and a branchpoint in the synthesis of polyamines. This chain is Acetylornithine deacetylase, found in Shigella boydii serotype 4 (strain Sb227).